The chain runs to 290 residues: Porphobilinogen deaminase (290 aa).

An S-(dipyrrolylmethanemethyl)cysteine modification is found at Cys-237.

It belongs to the HMBS family. In terms of assembly, monomer. Dipyrromethane serves as cofactor.

It catalyses the reaction 4 porphobilinogen + H2O = hydroxymethylbilane + 4 NH4(+). It functions in the pathway porphyrin-containing compound metabolism; protoporphyrin-IX biosynthesis; coproporphyrinogen-III from 5-aminolevulinate: step 2/4. In terms of biological role, tetrapolymerization of the monopyrrole PBG into the hydroxymethylbilane pre-uroporphyrinogen in several discrete steps. The chain is Porphobilinogen deaminase from Clostridium botulinum (strain 657 / Type Ba4).